The sequence spans 628 residues: Neutral/alkaline invertase 1, mitochondrial (628 aa).

The transit peptide at 1-35 (MAAAAISHLRRGAPRHARALLYLSTRRFSSSSAAG) directs the protein to the mitochondrion. Over residues 79 to 90 (ASSAPPLESPPI) the composition is skewed to low complexity. The segment at 79–113 (ASSAPPLESPPIEELPDDATPPPEEEPGLPAPEKD) is disordered.

The protein belongs to the glycosyl hydrolase 100 family. In terms of tissue distribution, expressed in roots, leaf and stems.

It localises to the mitochondrion. It catalyses the reaction Hydrolysis of terminal non-reducing beta-D-fructofuranoside residues in beta-D-fructofuranosides.. Functionally, mitochondrial invertase that cleaves sucrose into glucose and fructose. This Oryza sativa subsp. japonica (Rice) protein is Neutral/alkaline invertase 1, mitochondrial.